Consider the following 491-residue polypeptide: MATFKDACYHYKKLNKLNSLVLKLGANDEWRPAPVTKYKGWCLDCCQYTNLTYCRGCALYHVCQWCSQYNRCFLDEEPHLLRMRTFKDVVTKEDIEGLLTMYETLFPINEKLVNKFINSVKQRKCRNEYLLEWYNHLLMPITLQALTINLEDNVYYMFGYYDCMEHENQTPFQFVNLLEKYDKLLLDDRNFHRMSHLPVILQQEYALRYFSKSRFLSKGKKRLSRSDFSDNLMEDRHSPTSLMQVVRNCISIHIDDCEWNKACTLIVDARNYISIMNSSYTEHYSVSQRCKLFTKYKFGIVSKLVKPNYIFSSHESCALNVHNCKWCQINNHYKVWEDFRLRKIYNNVMDFIRALVKSNVNVGHCSSQESVYKYVPDLFLICKTEKWSEAVEMLFNYLEPVNVNGTEYVLLDYEVNWEVRGLVMQNMDGKVPRILNMNDTKKILSAMIFDWFDTRYMRETPMTTSTTNQLRTLNKRNELIDEYDLELSDVE.

The RNA-binding stretch occupies residues 1 to 81 (MATFKDACYH…CFLDEEPHLL (81 aa)). The segment at 42-79 (CLDCCQYTNLTYCRGCALYHVCQWCSQYNRCFLDEEPH) is zinc-binding domain. Residues 82–176 (RMRTFKDVVT…ENQTPFQFVN (95 aa)) form an important for cytoskeleton localization region. The segment at 320–491 (NVHNCKWCQI…EYDLELSDVE (172 aa)) is interaction with host IRF3. The pLxIS motif motif lies at 485-488 (LELS).

It belongs to the rotavirus NSP1 family. As to quaternary structure, interacts (via C-terminus) with host IRF3; this interaction leads to IRF3 degradation. Interacts with host IRF7; this interaction leads to IRF7 degradation. Interacts with host CUL1 and CUL3.

Its subcellular location is the host cytoplasm. It is found in the host cytoskeleton. Functionally, plays a role in the inhibition of host innate immunity by inducing the degradation of key host factors required to activate interferon production such as IRF3, IRF5 or IRF7. Associates with components of cullin RING ligases (CRLs) including CUL1 or CUL3, which are essential multisubunit ubiquitination complexes, to modulate their activities. The polypeptide is Non-structural protein 1 (Bos taurus (Bovine)).